The following is a 354-amino-acid chain: GRAM domain-containing protein 2A (354 aa).

Residues 1–29 are compositionally biased toward polar residues; it reads MTALSRSEATEEGGNQQMHRKTASLNSPV. A disordered region spans residues 1-46; it reads MTALSRSEATEEGGNQQMHRKTASLNSPVSCKEKPDRVEEPPDYSL. A compositionally biased stretch (basic and acidic residues) spans 31–40; the sequence is CKEKPDRVEE. One can recognise a GRAM domain in the interval 72–139; the sequence is QQYHKLFKDV…VSVQMIKKHK (68 aa). Residues 312-332 traverse the membrane as a helical segment; sequence LLKVFFVLICFLVMSSSYLAF.

It is found in the endoplasmic reticulum membrane. Its subcellular location is the cell membrane. In terms of biological role, participates in the organization of endoplasmic reticulum-plasma membrane contact sites (EPCS) with pleiotropic functions including STIM1 recruitment and calcium homeostasis. Constitutive tether that co-localize with ESYT2/3 tethers at endoplasmic reticulum-plasma membrane contact sites in a phosphatidylinositol lipid-dependent manner. Pre-marks the subset of phosphtidylinositol 4,5-biphosphate (PI(4,5)P2)-enriched EPCS destined for the store operated calcium entry pathway (SOCE). This Homo sapiens (Human) protein is GRAM domain-containing protein 2A.